The following is a 192-amino-acid chain: uncharacterized protein (192 aa).

Positions 29 to 160 constitute a Nudix hydrolase domain; that stretch reads QRQAAVLIPV…PLDVYRRGNS (132 aa). Positions 67 to 89 match the Nudix box motif; the sequence is GAVDSTDASLIAAALREAQEEVA. Residues Glu83 and Glu87 each coordinate Mg(2+).

Belongs to the Nudix hydrolase family. PCD1 subfamily. Mn(2+) serves as cofactor. It depends on Mg(2+) as a cofactor.

In terms of biological role, probably mediates the hydrolysis of some nucleoside diphosphate derivatives. This is an uncharacterized protein from Salmonella agona (strain SL483).